The primary structure comprises 593 residues: Probable serine/threonine-protein kinase samkB (593 aa).

An SAM domain is found at 29-93; that stretch reads WNNEAVCEWL…SIFKKLKNNN (65 aa). Residues 108–157 form a disordered region; the sequence is ESNSINNSNNNNNNNNNNNNNNNNNNNNNNNNNNNNNNNNNNNNNNKIDT. Over residues 113 to 153 the composition is skewed to low complexity; sequence NNSNNNNNNNNNNNNNNNNNNNNNNNNNNNNNNNNNNNNNN. A Protein kinase domain is found at 186 to 438; that stretch reads YKLIEEIGRG…SKQLLEAQWF (253 aa). ATP is bound by residues 192 to 200 and lysine 216; that span reads IGRGAFSIV. Aspartate 313 serves as the catalytic Proton acceptor.

Belongs to the protein kinase superfamily. Ser/Thr protein kinase family.

It carries out the reaction L-seryl-[protein] + ATP = O-phospho-L-seryl-[protein] + ADP + H(+). It catalyses the reaction L-threonyl-[protein] + ATP = O-phospho-L-threonyl-[protein] + ADP + H(+). The sequence is that of Probable serine/threonine-protein kinase samkB (samkB) from Dictyostelium discoideum (Social amoeba).